Here is a 1409-residue protein sequence, read N- to C-terminus: DNA-directed RNA polymerase subunit beta' (1409 aa).

Positions 70, 72, 85, and 88 each coordinate Zn(2+). 3 residues coordinate Mg(2+): D460, D462, and D464. Positions 814, 888, 895, and 898 each coordinate Zn(2+).

Belongs to the RNA polymerase beta' chain family. The RNAP catalytic core consists of 2 alpha, 1 beta, 1 beta' and 1 omega subunit. When a sigma factor is associated with the core the holoenzyme is formed, which can initiate transcription. It depends on Mg(2+) as a cofactor. Zn(2+) serves as cofactor.

The enzyme catalyses RNA(n) + a ribonucleoside 5'-triphosphate = RNA(n+1) + diphosphate. DNA-dependent RNA polymerase catalyzes the transcription of DNA into RNA using the four ribonucleoside triphosphates as substrates. This is DNA-directed RNA polymerase subunit beta' from Shewanella violacea.